Consider the following 517-residue polypeptide: MAKTNLNDFDKIIVLDFGSQYNQLITRRIRDFGIYSELLPHDLSIEKIKKMAPKGIIFSGGPNSVYDEGALKVDPEIFKLGIPILGICYGMQLMSYDLGGKVEKADNSEYGRADIEVTDPNAVLFEGLPKEQYVWMSHGDLVTKAPEGFKVTAKSKNCPISAIANDEKKFYGIQFHAEVRNSEYGLDILKNFAFNVCDAKANWTMDDFIEMQVDEIREKVGDKKVILGLSGGVDSSVTATLLHKAIGDQLTAIFVDHGMLRKDEGDQVMQALNKDLGVNIIRVNAQKRFLDKLKGVTDPEQKRKIIGKEFIEVFNEEAKKLKDVDFLAQGTLYTDVIESGTNTAQTIKSHHNVGGLPEDMHFELIEPLRKLFKDEVRELGEKLGIPHDLVWRQPFPGPGLAIRVLGEVTEDKLKIVRESDAILRDEIKKAGLQEDIWQYFTVLPGIRSVGVMGDGRTYDYTIGIRAVTSIDGMTADFAKLPWDVLSKISTRIVDECDHINRVVYDITSKPPSTIEWE.

The Glutamine amidotransferase type-1 domain maps to Lys-11–Asn-202. Cys-88 acts as the Nucleophile in catalysis. Catalysis depends on residues His-176 and Glu-178. In terms of domain architecture, GMPS ATP-PPase spans Trp-203–Arg-392. Ser-230 to Ser-236 contributes to the ATP binding site.

As to quaternary structure, homodimer.

It carries out the reaction XMP + L-glutamine + ATP + H2O = GMP + L-glutamate + AMP + diphosphate + 2 H(+). The protein operates within purine metabolism; GMP biosynthesis; GMP from XMP (L-Gln route): step 1/1. In terms of biological role, catalyzes the synthesis of GMP from XMP. The protein is GMP synthase [glutamine-hydrolyzing] of Lactobacillus gasseri (strain ATCC 33323 / DSM 20243 / BCRC 14619 / CIP 102991 / JCM 1131 / KCTC 3163 / NCIMB 11718 / NCTC 13722 / AM63).